The following is a 148-amino-acid chain: D-aminoacyl-tRNA deacylase (148 aa).

The short motif at 137–138 (GP) is the Gly-cisPro motif, important for rejection of L-amino acids element.

The protein belongs to the DTD family. In terms of assembly, homodimer.

It is found in the cytoplasm. The catalysed reaction is glycyl-tRNA(Ala) + H2O = tRNA(Ala) + glycine + H(+). It catalyses the reaction a D-aminoacyl-tRNA + H2O = a tRNA + a D-alpha-amino acid + H(+). In terms of biological role, an aminoacyl-tRNA editing enzyme that deacylates mischarged D-aminoacyl-tRNAs. Also deacylates mischarged glycyl-tRNA(Ala), protecting cells against glycine mischarging by AlaRS. Acts via tRNA-based rather than protein-based catalysis; rejects L-amino acids rather than detecting D-amino acids in the active site. By recycling D-aminoacyl-tRNA to D-amino acids and free tRNA molecules, this enzyme counteracts the toxicity associated with the formation of D-aminoacyl-tRNA entities in vivo and helps enforce protein L-homochirality. The polypeptide is D-aminoacyl-tRNA deacylase (Lacticaseibacillus casei (strain BL23) (Lactobacillus casei)).